We begin with the raw amino-acid sequence, 172 residues long: Chorion protein S18 (172 aa).

The N-terminal stretch at methionine 1–alanine 17 is a signal peptide.

Belongs to the chorion protein S15/S18 family.

It is found in the secreted. Its function is as follows. Chorion membrane (egg shell) protein; plays a role in protecting the egg from the environment. The polypeptide is Chorion protein S18 (Cp18) (Drosophila melanogaster (Fruit fly)).